The primary structure comprises 361 residues: MKDSIKAKLQSLIERHEEVSALLSEAGIISDQNKFRDLSKEYSHLEPIVKAFKKYTQALEDKQAAYEMLNEKDAELVEMAKEELKLANEAIEKLESELQIFLLPRDPNDDANVFLEIRAGTGGDEASIFSGDLFKMYSKYAEQRGWKIEVISASEGEHGGYKEIISRIYGDGVYSQLKFESGAHRVQRVPATESQGRIHTSACTVAVMPEADEVEGIDINPADIKVDTFRASGAGGQHVNKTDSAIRITHIPTGVVVECQDQRSQHKNRAAAMSMLKSKLLQAEIDKQQKEQSDTRKSLVGSGDRSERIRTYNYPQGRVTDHRINLTLYKLDEVMEGSLDSIIQPLVLEHQADLLATMSDE.

Q237 is subject to N5-methylglutamine. The span at 287-297 (KQQKEQSDTRK) shows a compositional bias: basic and acidic residues. Residues 287–313 (KQQKEQSDTRKSLVGSGDRSERIRTYN) are disordered.

The protein belongs to the prokaryotic/mitochondrial release factor family. In terms of processing, methylated by PrmC. Methylation increases the termination efficiency of RF1.

It localises to the cytoplasm. In terms of biological role, peptide chain release factor 1 directs the termination of translation in response to the peptide chain termination codons UAG and UAA. The sequence is that of Peptide chain release factor 1 from Francisella tularensis subsp. tularensis (strain FSC 198).